Here is a 191-residue protein sequence, read N- to C-terminus: ATP synthase subunit b 1 (191 aa).

Residues 7-25 (RMRILCLCATTLLMAGSAL) traverse the membrane as a helical segment.

It belongs to the ATPase B chain family. As to quaternary structure, F-type ATPases have 2 components, F(1) - the catalytic core - and F(0) - the membrane proton channel. F(1) has five subunits: alpha(3), beta(3), gamma(1), delta(1), epsilon(1). F(0) has three main subunits: a(1), b(2) and c(10-14). The alpha and beta chains form an alternating ring which encloses part of the gamma chain. F(1) is attached to F(0) by a central stalk formed by the gamma and epsilon chains, while a peripheral stalk is formed by the delta and b chains.

It localises to the cell inner membrane. In terms of biological role, f(1)F(0) ATP synthase produces ATP from ADP in the presence of a proton or sodium gradient. F-type ATPases consist of two structural domains, F(1) containing the extramembraneous catalytic core and F(0) containing the membrane proton channel, linked together by a central stalk and a peripheral stalk. During catalysis, ATP synthesis in the catalytic domain of F(1) is coupled via a rotary mechanism of the central stalk subunits to proton translocation. Its function is as follows. Component of the F(0) channel, it forms part of the peripheral stalk, linking F(1) to F(0). The chain is ATP synthase subunit b 1 from Syntrophotalea carbinolica (strain DSM 2380 / NBRC 103641 / GraBd1) (Pelobacter carbinolicus).